Reading from the N-terminus, the 282-residue chain is Bis(5'-nucleosyl)-tetraphosphatase, symmetrical (282 aa).

It belongs to the Ap4A hydrolase family.

It carries out the reaction P(1),P(4)-bis(5'-adenosyl) tetraphosphate + H2O = 2 ADP + 2 H(+). Hydrolyzes diadenosine 5',5'''-P1,P4-tetraphosphate to yield ADP. This is Bis(5'-nucleosyl)-tetraphosphatase, symmetrical from Escherichia coli O45:K1 (strain S88 / ExPEC).